The following is an 85-amino-acid chain: Large ribosomal subunit protein bL31B (85 aa).

This sequence belongs to the bacterial ribosomal protein bL31 family. Type B subfamily. Part of the 50S ribosomal subunit.

The chain is Large ribosomal subunit protein bL31B from Micrococcus luteus (strain ATCC 4698 / DSM 20030 / JCM 1464 / CCM 169 / CCUG 5858 / IAM 1056 / NBRC 3333 / NCIMB 9278 / NCTC 2665 / VKM Ac-2230) (Micrococcus lysodeikticus).